Here is a 179-residue protein sequence, read N- to C-terminus: MNNVEISRDECKAMSHGLYCRVASDAQLQRAGWLVQFAVVPRKGQKQLAANWPFYLVLHRALRNGPEFVGFLLFAAREIEQIRTRLGSGFRKTLVVGNDHFNKYIKYNGKTIVWCDVLCGTVVPKDSSHCPDVGLETLVPGTVLSGSQFATLSQNIGMALRGNCRCHLRDVCMVHQEVS.

This is an uncharacterized protein from Mushroom bacilliform virus (isolate Australia/AUS LF-1) (MBV).